A 176-amino-acid polypeptide reads, in one-letter code: ATP synthase subunit delta (176 aa).

Belongs to the ATPase delta chain family. F-type ATPases have 2 components, F(1) - the catalytic core - and F(0) - the membrane proton channel. F(1) has five subunits: alpha(3), beta(3), gamma(1), delta(1), epsilon(1). F(0) has three main subunits: a(1), b(2) and c(10-14). The alpha and beta chains form an alternating ring which encloses part of the gamma chain. F(1) is attached to F(0) by a central stalk formed by the gamma and epsilon chains, while a peripheral stalk is formed by the delta and b chains.

Its subcellular location is the cell inner membrane. F(1)F(0) ATP synthase produces ATP from ADP in the presence of a proton or sodium gradient. F-type ATPases consist of two structural domains, F(1) containing the extramembraneous catalytic core and F(0) containing the membrane proton channel, linked together by a central stalk and a peripheral stalk. During catalysis, ATP synthesis in the catalytic domain of F(1) is coupled via a rotary mechanism of the central stalk subunits to proton translocation. Functionally, this protein is part of the stalk that links CF(0) to CF(1). It either transmits conformational changes from CF(0) to CF(1) or is implicated in proton conduction. In Campylobacter concisus (strain 13826), this protein is ATP synthase subunit delta.